The sequence spans 110 residues: Class I hydrophobin 2 (110 aa).

An N-terminal signal peptide occupies residues 1 to 19; that stretch reads MFARAASVFVLSLPILATA. Intrachain disulfides connect Cys29–Cys89, Cys36–Cys83, Cys37–Cys70, and Cys90–Cys103.

It belongs to the fungal hydrophobin family. Self-assembles to form functional amyloid fibrils called rodlets. Self-assembly into fibrillar rodlets occurs spontaneously at hydrophobic:hydrophilic interfaces and the rodlets further associate laterally to form amphipathic monolayers.

Its subcellular location is the secreted. The protein localises to the cell wall. Functionally, aerial growth, conidiation, and dispersal of filamentous fungi in the environment rely upon a capability of their secreting small amphipathic proteins called hydrophobins (HPBs) with low sequence identity. Class I can self-assemble into an outermost layer of rodlet bundles on aerial cell surfaces, conferring cellular hydrophobicity that supports fungal growth, development and dispersal; whereas Class II form highly ordered films at water-air interfaces through intermolecular interactions but contribute nothing to the rodlet structure. Pnh2 is a class I hydrophobin that might be involved in the attachment of the hydrophilic wall of hyphae to the hydrophobic surface of wood under inorganic phosphate (Pi)-deficient conditions and enable the mycelium to degrade efficiently the components of wood and to acquire nutrients containing Pi. The chain is Class I hydrophobin 2 from Pholiota nameko.